The following is a 117-amino-acid chain: MTANKTAKIQFYEGTDEPVVPEIRLTRSKDGTSGQALFQFEKPQALSSITDGEITGMRMIDAEGEILTREVKVKFVDGEPIFLEAVYIWKSTSDFDRFMRFANSYAKSNGLGYSEKK.

This sequence belongs to the Psb28 family. In terms of assembly, part of the photosystem II complex.

The protein localises to the cellular thylakoid membrane. In Prochlorococcus marinus (strain MIT 9312), this protein is Photosystem II reaction center Psb28 protein.